Consider the following 376-residue polypeptide: uncharacterized protein (376 aa).

This sequence belongs to the glycosyltransferase 28 family.

This is an uncharacterized protein from Methanosarcina mazei (strain ATCC BAA-159 / DSM 3647 / Goe1 / Go1 / JCM 11833 / OCM 88) (Methanosarcina frisia).